We begin with the raw amino-acid sequence, 277 residues long: Protein G1-like2 (277 aa).

Over residues methionine 1–glutamate 16 the composition is skewed to gly residues. Disordered stretches follow at residues methionine 1–arginine 28, arginine 141–phenylalanine 203, and histidine 225–glycine 245. Over residues arginine 19 to arginine 28 the composition is skewed to basic and acidic residues. The ALOG domain occupies arginine 22–arginine 149. Residues lysine 147–lysine 151 carry the Nuclear localization signal motif. Over residues proline 154–alanine 177 the composition is skewed to low complexity. Positions serine 178–threonine 187 are enriched in pro residues.

This sequence belongs to the plant homeotic and developmental regulators ALOG protein family.

Its subcellular location is the nucleus. Probable transcription regulator that acts as a developmental regulator by promoting cell growth in response to light. In Oryza sativa subsp. japonica (Rice), this protein is Protein G1-like2 (G1L2).